An 80-amino-acid polypeptide reads, in one-letter code: Acyl carrier protein (80 aa).

One can recognise a Carrier domain in the interval glutamate 4 to lysine 79. Serine 39 is subject to O-(pantetheine 4'-phosphoryl)serine.

It belongs to the acyl carrier protein (ACP) family. In terms of processing, 4'-phosphopantetheine is transferred from CoA to a specific serine of apo-ACP by AcpS. This modification is essential for activity because fatty acids are bound in thioester linkage to the sulfhydryl of the prosthetic group.

The protein localises to the cytoplasm. It functions in the pathway lipid metabolism; fatty acid biosynthesis. In terms of biological role, carrier of the growing fatty acid chain in fatty acid biosynthesis. The protein is Acyl carrier protein of Prosthecochloris aestuarii (strain DSM 271 / SK 413).